The chain runs to 274 residues: Rhamnulose-1-phosphate aldolase (274 aa).

The active site involves Glu-117. Zn(2+)-binding residues include His-141, His-143, and His-212.

This sequence belongs to the aldolase class II family. RhaD subfamily. As to quaternary structure, homotetramer. Requires Zn(2+) as cofactor.

The protein resides in the cytoplasm. It catalyses the reaction L-rhamnulose 1-phosphate = (S)-lactaldehyde + dihydroxyacetone phosphate. It functions in the pathway carbohydrate degradation; L-rhamnose degradation; glycerone phosphate from L-rhamnose: step 3/3. In terms of biological role, catalyzes the reversible cleavage of L-rhamnulose-1-phosphate to dihydroxyacetone phosphate (DHAP) and L-lactaldehyde. This chain is Rhamnulose-1-phosphate aldolase, found in Escherichia coli O7:K1 (strain IAI39 / ExPEC).